The sequence spans 99 residues: Large ribosomal subunit protein eL36A (99 aa).

The protein belongs to the eukaryotic ribosomal protein eL36 family. As to quaternary structure, component of the large ribosomal subunit (LSU). Mature yeast ribosomes consist of a small (40S) and a large (60S) subunit. The 40S small subunit contains 1 molecule of ribosomal RNA (18S rRNA) and at least 33 different proteins. The large 60S subunit contains 3 rRNA molecules (25S, 5.8S and 5S rRNA) and at least 46 different proteins.

It localises to the cytoplasm. Component of the ribosome, a large ribonucleoprotein complex responsible for the synthesis of proteins in the cell. The small ribosomal subunit (SSU) binds messenger RNAs (mRNAs) and translates the encoded message by selecting cognate aminoacyl-transfer RNA (tRNA) molecules. The large subunit (LSU) contains the ribosomal catalytic site termed the peptidyl transferase center (PTC), which catalyzes the formation of peptide bonds, thereby polymerizing the amino acids delivered by tRNAs into a polypeptide chain. The nascent polypeptides leave the ribosome through a tunnel in the LSU and interact with protein factors that function in enzymatic processing, targeting, and the membrane insertion of nascent chains at the exit of the ribosomal tunnel. The protein is Large ribosomal subunit protein eL36A (rpl3601) of Schizosaccharomyces pombe (strain 972 / ATCC 24843) (Fission yeast).